Here is a 482-residue protein sequence, read N- to C-terminus: tRNA sulfurtransferase (482 aa).

Positions 58–160 (VEALQELSRV…GNKAYLYSNV (103 aa)) constitute a THUMP domain. ATP-binding positions include 178-179 (LF), 203-204 (HY), Arg-260, Gly-282, and Gln-291. An intrachain disulfide couples Cys-341 to Cys-444. Residues 400 to 482 (IPGDSIIIDV…RYRAGLEKTR (83 aa)) enclose the Rhodanese domain. Catalysis depends on Cys-444, which acts as the Cysteine persulfide intermediate.

The protein belongs to the ThiI family.

Its subcellular location is the cytoplasm. It carries out the reaction [ThiI sulfur-carrier protein]-S-sulfanyl-L-cysteine + a uridine in tRNA + 2 reduced [2Fe-2S]-[ferredoxin] + ATP + H(+) = [ThiI sulfur-carrier protein]-L-cysteine + a 4-thiouridine in tRNA + 2 oxidized [2Fe-2S]-[ferredoxin] + AMP + diphosphate. The catalysed reaction is [ThiS sulfur-carrier protein]-C-terminal Gly-Gly-AMP + S-sulfanyl-L-cysteinyl-[cysteine desulfurase] + AH2 = [ThiS sulfur-carrier protein]-C-terminal-Gly-aminoethanethioate + L-cysteinyl-[cysteine desulfurase] + A + AMP + 2 H(+). It functions in the pathway cofactor biosynthesis; thiamine diphosphate biosynthesis. Its function is as follows. Catalyzes the ATP-dependent transfer of a sulfur to tRNA to produce 4-thiouridine in position 8 of tRNAs, which functions as a near-UV photosensor. Also catalyzes the transfer of sulfur to the sulfur carrier protein ThiS, forming ThiS-thiocarboxylate. This is a step in the synthesis of thiazole, in the thiamine biosynthesis pathway. The sulfur is donated as persulfide by IscS. The chain is tRNA sulfurtransferase from Desulfurococcus amylolyticus (strain DSM 18924 / JCM 16383 / VKM B-2413 / 1221n) (Desulfurococcus kamchatkensis).